The chain runs to 316 residues: tRNA dimethylallyltransferase (316 aa).

Residue 17-24 (GPTASGKT) participates in ATP binding. 19–24 (TASGKT) contacts substrate. 3 interaction with substrate tRNA regions span residues 42-45 (DSAL), 166-170 (QRLSR), and 247-252 (RCVGYR).

It belongs to the IPP transferase family. In terms of assembly, monomer. Mg(2+) serves as cofactor.

The enzyme catalyses adenosine(37) in tRNA + dimethylallyl diphosphate = N(6)-dimethylallyladenosine(37) in tRNA + diphosphate. Its function is as follows. Catalyzes the transfer of a dimethylallyl group onto the adenine at position 37 in tRNAs that read codons beginning with uridine, leading to the formation of N6-(dimethylallyl)adenosine (i(6)A). The sequence is that of tRNA dimethylallyltransferase from Erwinia tasmaniensis (strain DSM 17950 / CFBP 7177 / CIP 109463 / NCPPB 4357 / Et1/99).